The following is a 497-amino-acid chain: Acetyl-coenzyme A carboxylase carboxyl transferase subunit beta, chloroplastic (497 aa).

Residues 230 to 497 (LWVQCENCYG…FFPLNQNSIK (268 aa)) enclose the CoA carboxyltransferase N-terminal domain. 4 residues coordinate Zn(2+): Cys-234, Cys-237, Cys-253, and Cys-256. The segment at 234 to 256 (CENCYGLNYKKFLKSKMNICEQC) adopts a C4-type zinc-finger fold.

The protein belongs to the AccD/PCCB family. As to quaternary structure, acetyl-CoA carboxylase is a heterohexamer composed of biotin carboxyl carrier protein, biotin carboxylase and 2 subunits each of ACCase subunit alpha and ACCase plastid-coded subunit beta (accD). Zn(2+) serves as cofactor.

It is found in the plastid. The protein localises to the chloroplast stroma. It catalyses the reaction N(6)-carboxybiotinyl-L-lysyl-[protein] + acetyl-CoA = N(6)-biotinyl-L-lysyl-[protein] + malonyl-CoA. It participates in lipid metabolism; malonyl-CoA biosynthesis; malonyl-CoA from acetyl-CoA: step 1/1. Its function is as follows. Component of the acetyl coenzyme A carboxylase (ACC) complex. Biotin carboxylase (BC) catalyzes the carboxylation of biotin on its carrier protein (BCCP) and then the CO(2) group is transferred by the transcarboxylase to acetyl-CoA to form malonyl-CoA. This chain is Acetyl-coenzyme A carboxylase carboxyl transferase subunit beta, chloroplastic, found in Carica papaya (Papaya).